We begin with the raw amino-acid sequence, 115 residues long: Large ribosomal subunit protein bL19 (115 aa).

Belongs to the bacterial ribosomal protein bL19 family. Part of the 50S ribosomal subunit.

This protein is located at the 30S-50S ribosomal subunit interface and may play a role in the structure and function of the aminoacyl-tRNA binding site. This Bacillus subtilis (strain 168) protein is Large ribosomal subunit protein bL19 (rplS).